A 177-amino-acid polypeptide reads, in one-letter code: MAEITTIARPYAKAAFDFALEQNAIENWVEMLNFAALVSENETMQPLLSGSLASNQLAELFIGVCGEQINEQAQNLLKVMAENGRLVVLPAVAQLFVEMQHEYAKEVEAQVVSATELTSEQQQEMSASLEKRLARKVKLNCSIDASLIAGVIITAGDLVIDGSVRGKISRLSDTLQS.

It belongs to the ATPase delta chain family. As to quaternary structure, F-type ATPases have 2 components, F(1) - the catalytic core - and F(0) - the membrane proton channel. F(1) has five subunits: alpha(3), beta(3), gamma(1), delta(1), epsilon(1). F(0) has three main subunits: a(1), b(2) and c(10-14). The alpha and beta chains form an alternating ring which encloses part of the gamma chain. F(1) is attached to F(0) by a central stalk formed by the gamma and epsilon chains, while a peripheral stalk is formed by the delta and b chains.

It is found in the cell inner membrane. In terms of biological role, f(1)F(0) ATP synthase produces ATP from ADP in the presence of a proton or sodium gradient. F-type ATPases consist of two structural domains, F(1) containing the extramembraneous catalytic core and F(0) containing the membrane proton channel, linked together by a central stalk and a peripheral stalk. During catalysis, ATP synthesis in the catalytic domain of F(1) is coupled via a rotary mechanism of the central stalk subunits to proton translocation. This protein is part of the stalk that links CF(0) to CF(1). It either transmits conformational changes from CF(0) to CF(1) or is implicated in proton conduction. This Shewanella piezotolerans (strain WP3 / JCM 13877) protein is ATP synthase subunit delta.